Reading from the N-terminus, the 940-residue chain is Serine/threonine-protein kinase PLK4 (940 aa).

One can recognise a Protein kinase domain in the interval 12–265; the sequence is FKVLTLLGKG…LSAVLDHPFM (254 aa). ATP is bound by residues 18–26 and K41; that span reads LGKGSFACV. The active-site Proton acceptor is the D136. Disordered regions lie at residues 262–353 and 409–529; these read HPFM…DLSR and RLFP…DAFV. A compositionally biased stretch (low complexity) spans 273 to 305; sequence SKDSGSSNGGSIDSGIATISTASNATNNSSSSR. Polar residues-rich tracts occupy residues 337–349, 440–465, and 494–519; these read FKSG…NSQD, NPAS…QPWF, and GTQT…QHNN. The region spanning 563 to 676 is the Cryptic POLO box 1 (CPB1) domain; sequence CLKKSFPPLC…TKFVQLVKSK (114 aa). The region spanning 677–791 is the Cryptic POLO box 2 (CPB2) domain; sequence TPKVTLYTKF…GRRPVNPVPP (115 aa). The POLO box domain maps to 857-935; it reads KVLKSIFVPN…LSSILGLLAN (79 aa).

This sequence belongs to the protein kinase superfamily. Ser/Thr protein kinase family. CDC5/Polo subfamily. In terms of assembly, homodimer. Post-translationally, ubiquitinated; leading to its degradation by the proteasome.

The protein localises to the cytoplasm. It is found in the cytoskeleton. The protein resides in the microtubule organizing center. It localises to the centrosome. Its subcellular location is the centriole. The enzyme catalyses L-seryl-[protein] + ATP = O-phospho-L-seryl-[protein] + ADP + H(+). It carries out the reaction L-threonyl-[protein] + ATP = O-phospho-L-threonyl-[protein] + ADP + H(+). Functionally, serine/threonine-protein kinase that plays a central role in centriole duplication. Able to trigger procentriole formation on the surface of the parental centriole cylinder, leading to the recruitment of centriole biogenesis proteins such as sass6, cpap, ccp110, cep135 and gamma-tubulin. When overexpressed, it is able to induce centrosome amplification through the simultaneous generation of multiple procentrioles adjoining each parental centriole during S phase. Its central role in centriole replication suggests a possible role in tumorigenesis, centrosome aberrations being frequently observed in tumors. Also involved in deuterosome-mediated centriole amplification in multiciliated that can generate more than 100 centrioles. The protein is Serine/threonine-protein kinase PLK4 of Danio rerio (Zebrafish).